A 726-amino-acid chain; its full sequence is Probable cyclic nucleotide-gated ion channel 14 (726 aa).

At 1-86 the chain is on the cytoplasmic side; the sequence is MEFKRDNTVR…GDAVLQWNRV (86 aa). A helical membrane pass occupies residues 87–107; the sequence is FLFWCLVALYVDPLFFFLSSV. The Extracellular segment spans residues 108–122; the sequence is KRIGRSSCMTTDLKL. Residues 123–143 form a helical membrane-spanning segment; sequence GIVITFFRTLADLFYVLHIVI. Over 144–177 the chain is Cytoplasmic; that stretch reads KFRTAYVSRTSRVFGRGELVKDPKLIARRYLRSD. Residues 178 to 198 form a helical membrane-spanning segment; it reads FIVDLIACLPLPQIVSWFILP. The Extracellular segment spans residues 199-211; it reads SIRSSHSDHTTNA. Residues 212-232 form a helical membrane-spanning segment; that stretch reads LVLIVLVQYIPRLYLIFPLSA. At 233–252 the chain is on the cytoplasmic side; sequence EIIKATGVVTTTAWAGAAYN. The helical transmembrane segment at 253-273 threads the bilayer; that stretch reads LLQYMLASHILGSAWYLLSIE. The Extracellular segment spans residues 274 to 377; sequence RQATCWKAEC…LSTSTSVLET (104 aa). A helical transmembrane segment spans residues 378 to 398; the sequence is MFAILVAIFGLVLFALLIGNM. Over 399–726 the chain is Cytoplasmic; the sequence is QTYLQSITVR…PDEPDFSVDD (328 aa). A nucleoside 3',5'-cyclic phosphate contacts are provided by residues 481-605 and E552; that span reads LFAQ…SKKL. Residues 597–612 form a calmodulin-binding region; the sequence is FRRLHSKKLQHTFRYY. The 30-residue stretch at 617-646 folds into the IQ domain; it reads RTWAACFVQVAWRRYKRKKLAKSLSLAESF. The tract at residues 707–726 is disordered; the sequence is KDVEIPMLPKPDEPDFSVDD.

This sequence belongs to the cyclic nucleotide-gated cation channel (TC 1.A.1.5) family. In terms of assembly, homotetramer or heterotetramer.

The protein resides in the cell membrane. In terms of biological role, probable cyclic nucleotide-gated ion channel. This is Probable cyclic nucleotide-gated ion channel 14 (CNGC14) from Arabidopsis thaliana (Mouse-ear cress).